The primary structure comprises 887 residues: Phosphatidylinositol 3-kinase catalytic subunit type 3 (887 aa).

The 150-residue stretch at 35–184 (YKAVLEDPML…LAKLTKAHRQ (150 aa)) folds into the C2 PI3K-type domain. A disordered region spans residues 149–170 (VEADGSEPTRTPGRTSSTLSED). Polar residues predominate over residues 156 to 170 (PTRTPGRTSSTLSED). T163 is subject to Phosphothreonine; by AMPK. S165 is modified (phosphoserine; by AMPK). 3 positions are modified to phosphoserine: S244, S261, and S282. Residues 283–520 (DHDLKPNATT…PKTHEMYLNV (238 aa)) form the PIK helical domain. A disordered region spans residues 416-467 (EPTKKDSQASVSESLSSSGVSSADIDSSQIITNPLPPVASPPPASKSKEVSD). Residues 423–444 (QASVSESLSSSGVSSADIDSSQ) show a composition bias toward low complexity. Over residues 449–459 (PLPPVASPPPA) the composition is skewed to pro residues. Residues 605-871 (IPETATLFKS…LIDESVHALF (267 aa)) form the PI3K/PI4K catalytic domain. The interval 611 to 617 (LFKSALM) is G-loop. The segment at 740-748 (GVGDRHLDN) is catalytic loop. Residues 759-780 (HIDFGYILGRDPKPLPPPMKLN) form an activation loop region.

This sequence belongs to the PI3/PI4-kinase family. As to quaternary structure, component of the PI3K (PI3KC3/PI3K-III/class III phosphatidylinositol 3-kinase) complex the core of which is composed of the catalytic subunit PIK3C3, the regulatory subunit PIK3R4 and BECN1 associating with additional regulatory/auxiliary subunits to form alternative complex forms. Alternative complex forms containing a fourth regulatory subunit in a mutually exclusive manner are: the PI3K complex I (PI3KC3-C1) containing ATG14, and the PI3K complex II (PI3KC3-C2) containing UVRAG. PI3KC3-C1 displays a V-shaped architecture with PIK3R4 serving as a bridge between PIK3C3 and the ATG14:BECN1 subcomplex. Both, PI3KC3-C1 and PI3KC3-C2, can associate with further regulatory subunits such as RUBCN, SH3GLB1/Bif-1 and AMBRA1. PI3KC3-C1 probably associates with PIK3CB. Interacts with RAB7A in the presence of PIK3R4. Interacts with AMBRA1. Interacts with BECN1P1/BECN2. Interacts with SLAMF1. May interact with DYN2. May be a component of a complex composed of RAB5A (in GDP-bound form), DYN2 and PIK3C3. Interacts with NCKAP1L. Interacts with ATG14; this interaction is increased in the absence of TMEM39A. Interacts with STEEP1; the interaction is STING1-dependent and required for trafficking of STING1 from the endoplasmic reticulum. Interacts with YWHAG. Interacts with ARMC3. Mn(2+) serves as cofactor. Post-translationally, ubiquitinated via 'Lys-29'- and 'Lys-48'-linked ubiquitination by UBE3C, promoting its degradation. Deubiquitination by ZRANB1/TRABID promotes its stabilization, leading to autophagosome maturation.

It localises to the midbody. Its subcellular location is the late endosome. It is found in the cytoplasmic vesicle. The protein resides in the autophagosome. The enzyme catalyses a 1,2-diacyl-sn-glycero-3-phospho-(1D-myo-inositol) + ATP = a 1,2-diacyl-sn-glycero-3-phospho-(1D-myo-inositol-3-phosphate) + ADP + H(+). Functionally, catalytic subunit of the PI3K complex that mediates formation of phosphatidylinositol 3-phosphate; different complex forms are believed to play a role in multiple membrane trafficking pathways: PI3KC3-C1 is involved in initiation of autophagosomes and PI3KC3-C2 in maturation of autophagosomes and endocytosis. As part of PI3KC3-C1, promotes endoplasmic reticulum membrane curvature formation prior to vesicle budding. Involved in regulation of degradative endocytic trafficking and required for the abscission step in cytokinesis, probably in the context of PI3KC3-C2. Involved in the transport of lysosomal enzyme precursors to lysosomes. Required for transport from early to late endosomes. This chain is Phosphatidylinositol 3-kinase catalytic subunit type 3, found in Rattus norvegicus (Rat).